The following is a 233-amino-acid chain: Ribonuclease 3 (233 aa).

The 128-residue stretch at 9-136 (LQHFWEQFHL…IIGSVYLSGG (128 aa)) folds into the RNase III domain. Glu49 serves as a coordination point for Mg(2+). The active site involves Asp53. Asp122 and Glu125 together coordinate Mg(2+). Residue Glu125 is part of the active site. The 70-residue stretch at 162–231 (DSKSALQEFV…ARAALALLKV (70 aa)) folds into the DRBM domain.

This sequence belongs to the ribonuclease III family. Homodimer. Mg(2+) is required as a cofactor.

The protein localises to the cytoplasm. The catalysed reaction is Endonucleolytic cleavage to 5'-phosphomonoester.. In terms of biological role, digests double-stranded RNA. Involved in the processing of primary rRNA transcript to yield the immediate precursors to the large and small rRNAs (23S and 16S). Processes some mRNAs, and tRNAs when they are encoded in the rRNA operon. Processes pre-crRNA and tracrRNA of type II CRISPR loci if present in the organism. This Moorella thermoacetica (strain ATCC 39073 / JCM 9320) protein is Ribonuclease 3.